The primary structure comprises 137 residues: Large ribosomal subunit protein uL16 (137 aa).

The protein belongs to the universal ribosomal protein uL16 family. As to quaternary structure, part of the 50S ribosomal subunit.

In terms of biological role, binds 23S rRNA and is also seen to make contacts with the A and possibly P site tRNAs. The sequence is that of Large ribosomal subunit protein uL16 from Nitratidesulfovibrio vulgaris (strain ATCC 29579 / DSM 644 / CCUG 34227 / NCIMB 8303 / VKM B-1760 / Hildenborough) (Desulfovibrio vulgaris).